Consider the following 425-residue polypeptide: 5-aminovalerate aminotransferase DavT (425 aa).

Pyridoxal 5'-phosphate contacts are provided by residues 112–113 (GS), tyrosine 139, and 240–243 (DEVQ). Lysine 269 is modified (N6-(pyridoxal phosphate)lysine). Residue threonine 298 coordinates pyridoxal 5'-phosphate.

The protein belongs to the class-III pyridoxal-phosphate-dependent aminotransferase family. The cofactor is pyridoxal 5'-phosphate.

The enzyme catalyses 5-aminopentanoate + 2-oxoglutarate = 5-oxopentanoate + L-glutamate. Catalyzes the conversion of 5-aminovalerate to 5-oxopentanoate. The polypeptide is 5-aminovalerate aminotransferase DavT (davT) (Pseudomonas putida (strain ATCC 47054 / DSM 6125 / CFBP 8728 / NCIMB 11950 / KT2440)).